Reading from the N-terminus, the 361-residue chain is tRNA/tmRNA (uracil-C(5))-methyltransferase (361 aa).

S-adenosyl-L-methionine is bound by residues Gln-185, Tyr-213, Asn-218, Glu-234, and Asp-294. Cys-319 serves as the catalytic Nucleophile. The active-site Proton acceptor is Glu-353.

It belongs to the class I-like SAM-binding methyltransferase superfamily. RNA M5U methyltransferase family. TrmA subfamily.

It catalyses the reaction uridine(54) in tRNA + S-adenosyl-L-methionine = 5-methyluridine(54) in tRNA + S-adenosyl-L-homocysteine + H(+). The catalysed reaction is uridine(341) in tmRNA + S-adenosyl-L-methionine = 5-methyluridine(341) in tmRNA + S-adenosyl-L-homocysteine + H(+). In terms of biological role, dual-specificity methyltransferase that catalyzes the formation of 5-methyluridine at position 54 (m5U54) in all tRNAs, and that of position 341 (m5U341) in tmRNA (transfer-mRNA). This Azotobacter vinelandii (strain DJ / ATCC BAA-1303) protein is tRNA/tmRNA (uracil-C(5))-methyltransferase.